A 66-amino-acid polypeptide reads, in one-letter code: MKMLKIFLLFLLFWLQCSLWIGKNGILDYIKIYKKIIVQKKKNEDFQIRNNQLILEIERLNNAIKN.

Residues 1–3 (MKM) lie on the Cytoplasmic side of the membrane. A helical membrane pass occupies residues 4–21 (LKIFLLFLLFWLQCSLWI). Residues 22–66 (GKNGILDYIKIYKKIIVQKKKNEDFQIRNNQLILEIERLNNAIKN) lie on the Extracellular side of the membrane. Residues 38–66 (VQKKKNEDFQIRNNQLILEIERLNNAIKN) adopt a coiled-coil conformation.

It belongs to the FtsB family.

It is found in the cell membrane. Functionally, essential cell division protein. May link together the upstream cell division proteins, which are predominantly cytoplasmic, with the downstream cell division proteins, which are predominantly extracellular. The polypeptide is Cell division protein FtsB (Buchnera aphidicola subsp. Schizaphis graminum (strain Sg)).